A 464-amino-acid chain; its full sequence is Phosphoenolpyruvate carboxylase (464 aa).

The protein belongs to the PEPCase type 2 family. In terms of assembly, homotetramer. Mg(2+) is required as a cofactor.

The catalysed reaction is oxaloacetate + phosphate = phosphoenolpyruvate + hydrogencarbonate. Functionally, catalyzes the irreversible beta-carboxylation of phosphoenolpyruvate (PEP) to form oxaloacetate (OAA), a four-carbon dicarboxylic acid source for the tricarboxylic acid cycle. This Thermofilum pendens (strain DSM 2475 / Hrk 5) protein is Phosphoenolpyruvate carboxylase.